The sequence spans 173 residues: Photosystem I reaction center subunit XI (173 aa).

Helical transmembrane passes span 92-112 (LAGL…LSLY) and 148-168 (LIGG…LGII).

This sequence belongs to the PsaL family.

The protein resides in the cellular thylakoid membrane. This Nostoc punctiforme (strain ATCC 29133 / PCC 73102) protein is Photosystem I reaction center subunit XI.